Here is a 266-residue protein sequence, read N- to C-terminus: MTDRDRLRPPLDERSLRDQLIGAGSGWRQLDVVAQTGSTNADLLARAASGADIDGVVLIAEHQTAGRGRHGRGWAATARAQIILSVGVRVVDVPVQAWGWLSLAAGLAVLDSVAPLIAVPPAETGLKWPNDVLARGGKLAGILAEVAQPFVVLGVGLNVTQAPEEVDPDATSLLDLGVAAPDRNRIASRLLRELEARIIQWRNANPQLAADYRARSLTIGSRVRVELPGGQDVVGIARDIDDQGRLCLDVGGRTVVVSAGDVVHLR.

In terms of domain architecture, BPL/LPL catalytic spans 14–202 (RSLRDQLIGA…ELEARIIQWR (189 aa)). Biotin contacts are provided by residues 38 to 39 (ST), Gln63, Arg67, and Lys138.

This sequence belongs to the biotin--protein ligase family. Monomer in solution. Forms dimers under specific crystallization conditions.

The catalysed reaction is biotin + L-lysyl-[protein] + ATP = N(6)-biotinyl-L-lysyl-[protein] + AMP + diphosphate + H(+). It carries out the reaction biotin + ATP + H(+) = biotinyl-5'-AMP + diphosphate. It catalyses the reaction biotinyl-5'-AMP + L-lysyl-[protein] = N(6)-biotinyl-L-lysyl-[protein] + AMP + 2 H(+). Its activity is regulated as follows. Binding of biotin and ATP significantly increases the thermal stability of BirA and leads to the formation of a high affinity holoenzyme complex. Functionally, catalyzes the transfer of biotin onto a conserved lysine residue of the biotin carboxyl carrier protein (BCCP) domain of acetyl-CoA carboxylase and converts it to active holo-BCCP. Forms an acyl-adenylate intermediate. Cannot use GTP or desthiobiotin. The protein is Biotin--[acetyl-CoA-carboxylase] ligase of Mycobacterium tuberculosis (strain ATCC 25618 / H37Rv).